The primary structure comprises 351 residues: Calcium homeostasis modulator 1 (351 aa).

The Cytoplasmic portion of the chain corresponds to 1 to 20 (MDKFRMMFQFLQSNQESFMN). The tract at residues 9 to 36 (QFLQSNQESFMNGICGIMALASAQMYSS) is central pore. A helical membrane pass occupies residues 21–36 (GICGIMALASAQMYSS). Residues 37–48 (FEFSCPCMPEYN) lie on the Extracellular side of the membrane. 2 disulfide bridges follow: C41–C126 and C43–C160. A helical membrane pass occupies residues 49 to 71 (YTYGIGLLIIPPIWFFLLGFVLN). Residues 62–69 (WFFLLGFV) are phospholipid-binding. The Cytoplasmic portion of the chain corresponds to 72–98 (NNVSVLAEEWKRPTGRRTKDPSVLRYM). Residues 99 to 124 (LCSITQRSLIAPAVWVSVTLMDGKSF) form a helical membrane-spanning segment. A lipid anchor (S-palmitoyl cysteine) is attached at C100. The phospholipid-binding stretch occupies residues 104–116 (QRSLIAPAVWVSV). Residues 125-177 (LCAFSINLDIEKFGNASLVIGMTETEKLKFLARIPCKDLFEDNEVRVAATRYI) lie on the Extracellular side of the membrane. N-linked (GlcNAc...) asparagine glycosylation occurs at N139. The chain crosses the membrane as a helical span at residues 178–203 (KCISQACGWMFLLMMTFTAFLIRAIR). The segment at 189-199 (LLMMTFTAFLI) is phospholipid-binding. Over 204–351 (PCFTQAAFLK…KEWAVYYSKV (148 aa)) the chain is Cytoplasmic. C205 carries the S-palmitoyl cysteine lipid modification. Residues 259-281 (HRHQSKDTSDAEEEEKQRSDEDK) are disordered. Positions 263–281 (SKDTSDAEEEEKQRSDEDK) are enriched in basic and acidic residues.

This sequence belongs to the CALHM family. Oligomerizes to form hexamers and octamers. Does not form gap junctions. Associates with CALHM3 as a pore-forming subunit in a hetero-hexameric channel complex. In terms of processing, N-glycosylated. Palmitoylated.

The protein localises to the cell membrane. Its subcellular location is the endoplasmic reticulum membrane. The protein resides in the basolateral cell membrane. It carries out the reaction ATP(in) = ATP(out). It catalyses the reaction Ca(2+)(in) = Ca(2+)(out). The enzyme catalyses Mg(2+)(in) = Mg(2+)(out). The catalysed reaction is Na(+)(in) = Na(+)(out). It carries out the reaction K(+)(in) = K(+)(out). It catalyses the reaction Li(+)(in) = Li(+)(out). The enzyme catalyses Rb(+)(in) = Rb(+)(out). The catalysed reaction is Cs(+)(in) = Cs(+)(out). It carries out the reaction chloride(in) = chloride(out). With respect to regulation, activated in response to membrane depolarization and low extracellular Ca(2+) concentration. Inhibited by ruthenium red. Pore-forming subunit of a voltage-gated ion channel. Has poor ion selectivity and forms a wide pore that mediates permeation of small ions including Ca(2+), Na(+), K(+) and Cl(-), as well as larger ions such as ATP(4-). This chain is Calcium homeostasis modulator 1, found in Oryzias latipes (Japanese rice fish).